The primary structure comprises 170 residues: Myosin regulatory light chain 2, skeletal muscle isoform (170 aa).

Position 2 is a n,N,N-trimethylalanine (A2). 2 positions are modified to phosphoserine: S16 and S17. Phosphothreonine occurs at positions 26 and 36. One can recognise an EF-hand 1 domain in the interval 26 to 61 (TQIQEFKEAFTVIDQNRDGIIDKEDLRDTFAAMGRL). Positions 39, 41, 43, and 50 each coordinate Ca(2+). Phosphoserine is present on S76. EF-hand domains follow at residues 96–131 (DPED…QCDR) and 132–167 (FSQE…GDAK). At T102 the chain carries Phosphothreonine.

In terms of assembly, myosin is a hexamer of 2 heavy chains and 4 light chains.

Its function is as follows. Plays a role in muscle contraction. This Bos taurus (Bovine) protein is Myosin regulatory light chain 2, skeletal muscle isoform.